A 60-amino-acid chain; its full sequence is Large ribosomal subunit protein bL32 (60 aa).

Positions 1 to 60 are disordered; the sequence is MAVQQNKKSRSARDMRRSHDALEPNALSVEKSTGEVHLRHHVSPDGFYRGRKVIDKGADE. The segment covering 11–22 has biased composition (basic and acidic residues); it reads SARDMRRSHDAL.

The protein belongs to the bacterial ribosomal protein bL32 family.

The sequence is that of Large ribosomal subunit protein bL32 from Stutzerimonas stutzeri (strain A1501) (Pseudomonas stutzeri).